We begin with the raw amino-acid sequence, 659 residues long: MRNYKELKHEKNGNVTEKIGENKGKSKKMSKDESLLSFDLFLEGKEHSAYKFMGAHFITENRKRGVRFTTWSPRASKIYIIGDFNNWELKEEYSMKKINERGIWSLFIPKLEEGIKYKFAVENECGNNTVYKSDPYAFKSELRPNTASVLTKIKSFRWGDKRWLNKREKEGLDNKPMNIYELHLGSWKRKDGEFMTYEEISEVLVEYIKEMGYTHVEFMPVNEHPLDASWGYQGVGYYSVTSRYGDLNGLKTLINKLHKNNIGVLLDWVPSHFCKDEHGLFMFDGSPTYEYEVWWKANNEGWGTCNFDLGRPEVKSFLFSNAMYWINEFHVDGLRVDAVSNMLYLDYGREYGEWEPNIYGENGNLEAIAFLKELNTIIKKEGKGAITVAEESTSWEGITKSVEEGGLGFDYKWNMGWMNDTLSYIELDPIYRKYHHNKMNFSMMYNYSEKFILPISHDEVVHGKKSLINKMWGDDWKKYAGLRLYASFMMGHPGKKLMFMGCEFGQFVEWREWEELQWSVIEEFDIHRKTKEYFKALNKFYLENSSLWSLDYEEEGFKWMDADNSEESVLSFIRIGKNKKEKLIFICNFTPEVYYDFKVGVPELGEYVEVFNSDSLEFGGVGNIMGDSILKATEESFKDFDYSISVKVPPLGTLVLKVK.

The tract at residues 1-26 (MRNYKELKHEKNGNVTEKIGENKGKS) is disordered. The active-site Nucleophile is Asp337. Residue Glu390 is the Proton donor of the active site.

It belongs to the glycosyl hydrolase 13 family. GlgB subfamily. As to quaternary structure, monomer.

It carries out the reaction Transfers a segment of a (1-&gt;4)-alpha-D-glucan chain to a primary hydroxy group in a similar glucan chain.. It participates in glycan biosynthesis; glycogen biosynthesis. Its function is as follows. Catalyzes the formation of the alpha-1,6-glucosidic linkages in glycogen by scission of a 1,4-alpha-linked oligosaccharide from growing alpha-1,4-glucan chains and the subsequent attachment of the oligosaccharide to the alpha-1,6 position. The chain is 1,4-alpha-glucan branching enzyme GlgB 2 from Clostridium perfringens (strain SM101 / Type A).